A 720-amino-acid chain; its full sequence is Putative fatty acid oxidation complex trifunctional enzyme (720 aa).

The segment at 1 to 384 (MQNEIKKVCV…SWHYGPFELL (384 aa)) is 3-hydroxyacyl-CoA dehydrogenase. The enoyl-CoA hydratase/isomerase stretch occupies residues 453–720 (FVITTKMNSL…TIEKLQAIVG (268 aa)).

In the N-terminal section; belongs to the 3-hydroxyacyl-CoA dehydrogenase family. It in the C-terminal section; belongs to the enoyl-CoA hydratase/isomerase family.

The catalysed reaction is a (3S)-3-hydroxyacyl-CoA + NAD(+) = a 3-oxoacyl-CoA + NADH + H(+). The enzyme catalyses a (3S)-3-hydroxyacyl-CoA = a (2E)-enoyl-CoA + H2O. It catalyses the reaction a 4-saturated-(3S)-3-hydroxyacyl-CoA = a (3E)-enoyl-CoA + H2O. It carries out the reaction a (3Z)-enoyl-CoA = a 4-saturated (2E)-enoyl-CoA. The catalysed reaction is a (3E)-enoyl-CoA = a 4-saturated (2E)-enoyl-CoA. This chain is Putative fatty acid oxidation complex trifunctional enzyme, found in Rickettsia prowazekii (strain Madrid E).